An 801-amino-acid polypeptide reads, in one-letter code: Phosphorus acquisition-controlling protein (801 aa).

Disordered regions lie at residues 292 to 317, 366 to 607, 628 to 725, and 756 to 801; these read GSSPREMELEPPAMSQASVSPGDLAR, APSQ…SAGA, NTVP…ASTV, and MKMQ…AMDE. Low complexity predominate over residues 374-386; it reads PLTPLIPTSSSST. Polar residues-rich tracts occupy residues 387-401 and 459-472; these read AGVTDSENGSISPEN and KLSSPSNRNPSVVG. The interval 446–540 is interaction with negative regulatory factor; sequence PGIASPATPA…PPSPAVAKPL (95 aa). The span at 477-486 shows a compositional bias: basic and acidic residues; it reads DPMDPDHIEN. Positions 535-554 are enriched in low complexity; the sequence is AVAKPLALPSAALSSPQLKP. Over residues 637-646 the composition is skewed to polar residues; the sequence is SELSTNLTSK. In terms of domain architecture, bHLH spans 645–735; the sequence is SKRTSHKIAE…EMAIEYIKQL (91 aa). A compositionally biased stretch (basic and acidic residues) spans 676 to 687; it reads PAKEGGDGDGDG. Residues 690–699 show a composition bias toward gly residues; that stretch reads SSGGGGGSGG. The segment covering 700–713 has biased composition (basic and acidic residues); sequence ADREDKREKDKDKA. Over residues 765–777 the composition is skewed to low complexity; that stretch reads GSGSSVGDAGDLG.

In terms of assembly, binds DNA as a dimer.

Its subcellular location is the nucleus. In terms of biological role, factor that activates the transcription of structural genes for phosphorus acquisition. In Neurospora crassa (strain ATCC 24698 / 74-OR23-1A / CBS 708.71 / DSM 1257 / FGSC 987), this protein is Phosphorus acquisition-controlling protein (nuc-1).